The sequence spans 336 residues: Biotin synthase (336 aa).

The 228-residue stretch at 55–282 (NRVQLSKLLN…QSHVRLTAGR (228 aa)) folds into the Radical SAM core domain. Residues Cys70, Cys74, and Cys77 each coordinate [4Fe-4S] cluster. Residues Cys114, Cys145, Cys205, and Arg277 each coordinate [2Fe-2S] cluster.

It belongs to the radical SAM superfamily. Biotin synthase family. Homodimer. The cofactor is [4Fe-4S] cluster. Requires [2Fe-2S] cluster as cofactor.

It catalyses the reaction (4R,5S)-dethiobiotin + (sulfur carrier)-SH + 2 reduced [2Fe-2S]-[ferredoxin] + 2 S-adenosyl-L-methionine = (sulfur carrier)-H + biotin + 2 5'-deoxyadenosine + 2 L-methionine + 2 oxidized [2Fe-2S]-[ferredoxin]. It functions in the pathway cofactor biosynthesis; biotin biosynthesis; biotin from 7,8-diaminononanoate: step 2/2. Its function is as follows. Catalyzes the conversion of dethiobiotin (DTB) to biotin by the insertion of a sulfur atom into dethiobiotin via a radical-based mechanism. The polypeptide is Biotin synthase (Brucella anthropi (strain ATCC 49188 / DSM 6882 / CCUG 24695 / JCM 21032 / LMG 3331 / NBRC 15819 / NCTC 12168 / Alc 37) (Ochrobactrum anthropi)).